The chain runs to 347 residues: 4-hydroxythreonine-4-phosphate dehydrogenase (347 aa).

The substrate site is built by H137 and T138. Positions 174, 219, and 274 each coordinate a divalent metal cation. Residues K282, N291, and R300 each coordinate substrate.

It belongs to the PdxA family. As to quaternary structure, homodimer. Requires Zn(2+) as cofactor. Mg(2+) is required as a cofactor. The cofactor is Co(2+).

It is found in the cytoplasm. The catalysed reaction is 4-(phosphooxy)-L-threonine + NAD(+) = 3-amino-2-oxopropyl phosphate + CO2 + NADH. The protein operates within cofactor biosynthesis; pyridoxine 5'-phosphate biosynthesis; pyridoxine 5'-phosphate from D-erythrose 4-phosphate: step 4/5. Its function is as follows. Catalyzes the NAD(P)-dependent oxidation of 4-(phosphooxy)-L-threonine (HTP) into 2-amino-3-oxo-4-(phosphooxy)butyric acid which spontaneously decarboxylates to form 3-amino-2-oxopropyl phosphate (AHAP). In Cupriavidus pinatubonensis (strain JMP 134 / LMG 1197) (Cupriavidus necator (strain JMP 134)), this protein is 4-hydroxythreonine-4-phosphate dehydrogenase.